A 186-amino-acid chain; its full sequence is Ribosome-recycling factor (186 aa).

The protein belongs to the RRF family.

It localises to the cytoplasm. Its function is as follows. Responsible for the release of ribosomes from messenger RNA at the termination of protein biosynthesis. May increase the efficiency of translation by recycling ribosomes from one round of translation to another. The protein is Ribosome-recycling factor of Cytophaga hutchinsonii (strain ATCC 33406 / DSM 1761 / CIP 103989 / NBRC 15051 / NCIMB 9469 / D465).